The sequence spans 166 residues: UPF0561 protein C2orf68 (166 aa).

The tract at residues Asn32–Leu107 is disordered. 2 stretches are compositionally biased toward basic and acidic residues: residues Ile34–Glu49 and Arg73–Asp85. Residues Glu91–Gly104 are compositionally biased toward low complexity.

Belongs to the UPF0561 family.

The protein is UPF0561 protein C2orf68 (C2orf68) of Homo sapiens (Human).